Reading from the N-terminus, the 1588-residue chain is Pentafunctional AROM polypeptide (1588 aa).

A 3-dehydroquinate synthase region spans residues 1 to 392; that stretch reads MVQLAKVPIL…YGDSAQFVSD (392 aa). NAD(+)-binding positions include 43–45, 78–81, 109–111, and Asp114; these read DTN, ETSK, and GGV. Arg125 contacts 7-phospho-2-dehydro-3-deoxy-D-arabino-heptonate. 134–135 contributes to the NAD(+) binding site; it reads TS. 7-phospho-2-dehydro-3-deoxy-D-arabino-heptonate is bound by residues Asp141 and Lys147. Lys156 is a binding site for NAD(+). A 7-phospho-2-dehydro-3-deoxy-D-arabino-heptonate-binding site is contributed by Asn157. NAD(+) contacts are provided by residues 174–177 and Asn185; that span reads WLET. A Zn(2+)-binding site is contributed by Glu189. 7-phospho-2-dehydro-3-deoxy-D-arabino-heptonate is bound by residues 189 to 192 and Lys258; that span reads EVIK. Glu268 serves as the catalytic Proton acceptor; for 3-dehydroquinate synthase activity. Residues 272 to 276 and His279 contribute to the 7-phospho-2-dehydro-3-deoxy-D-arabino-heptonate site; that span reads RNLLN. Position 279 (His279) interacts with Zn(2+). The Proton acceptor; for 3-dehydroquinate synthase activity role is filled by His283. Positions 295 and 364 each coordinate 7-phospho-2-dehydro-3-deoxy-D-arabino-heptonate. Zn(2+) is bound at residue His295. Residues 405-871 are EPSP synthase; the sequence is VYPFKDIPAD…WDVLHSELGA (467 aa). Catalysis depends on Cys853, which acts as the For EPSP synthase activity. The segment at 890-1080 is shikimate kinase; it reads SVVIIGMRAA…IPSGRSAFVC (191 aa). 895–902 provides a ligand contact to ATP; the sequence is GMRAAGKT. The 3-dehydroquinase stretch occupies residues 1081-1293; it reads LTFDDLTEQT…AAPGQLTVAQ (213 aa). The active-site Proton acceptor; for 3-dehydroquinate dehydratase activity is the His1198. The Schiff-base intermediate with substrate; for 3-dehydroquinate dehydratase activity role is filled by Lys1227. Positions 1306–1588 are shikimate dehydrogenase; it reads PKELFVVGKP…KAIFDAVTKE (283 aa).

It in the N-terminal section; belongs to the sugar phosphate cyclases superfamily. Dehydroquinate synthase family. In the 2nd section; belongs to the EPSP synthase family. The protein in the 3rd section; belongs to the shikimate kinase family. This sequence in the 4th section; belongs to the type-I 3-dehydroquinase family. It in the C-terminal section; belongs to the shikimate dehydrogenase family. Homodimer. Zn(2+) is required as a cofactor.

The protein resides in the cytoplasm. It catalyses the reaction 7-phospho-2-dehydro-3-deoxy-D-arabino-heptonate = 3-dehydroquinate + phosphate. The enzyme catalyses 3-dehydroquinate = 3-dehydroshikimate + H2O. It carries out the reaction shikimate + NADP(+) = 3-dehydroshikimate + NADPH + H(+). The catalysed reaction is shikimate + ATP = 3-phosphoshikimate + ADP + H(+). It catalyses the reaction 3-phosphoshikimate + phosphoenolpyruvate = 5-O-(1-carboxyvinyl)-3-phosphoshikimate + phosphate. The protein operates within metabolic intermediate biosynthesis; chorismate biosynthesis; chorismate from D-erythrose 4-phosphate and phosphoenolpyruvate: step 2/7. Its pathway is metabolic intermediate biosynthesis; chorismate biosynthesis; chorismate from D-erythrose 4-phosphate and phosphoenolpyruvate: step 3/7. It participates in metabolic intermediate biosynthesis; chorismate biosynthesis; chorismate from D-erythrose 4-phosphate and phosphoenolpyruvate: step 4/7. It functions in the pathway metabolic intermediate biosynthesis; chorismate biosynthesis; chorismate from D-erythrose 4-phosphate and phosphoenolpyruvate: step 5/7. The protein operates within metabolic intermediate biosynthesis; chorismate biosynthesis; chorismate from D-erythrose 4-phosphate and phosphoenolpyruvate: step 6/7. The AROM polypeptide catalyzes 5 consecutive enzymatic reactions in prechorismate polyaromatic amino acid biosynthesis. The chain is Pentafunctional AROM polypeptide from Saccharomyces cerevisiae (strain Lalvin EC1118 / Prise de mousse) (Baker's yeast).